We begin with the raw amino-acid sequence, 72 residues long: Translation initiation factor IF-1 (72 aa).

Positions 1 to 72 (MAREDLIEVE…SRGRITYRKK (72 aa)) constitute an S1-like domain.

This sequence belongs to the IF-1 family. In terms of assembly, component of the 30S ribosomal translation pre-initiation complex which assembles on the 30S ribosome in the order IF-2 and IF-3, IF-1 and N-formylmethionyl-tRNA(fMet); mRNA recruitment can occur at any time during PIC assembly.

It is found in the cytoplasm. One of the essential components for the initiation of protein synthesis. Stabilizes the binding of IF-2 and IF-3 on the 30S subunit to which N-formylmethionyl-tRNA(fMet) subsequently binds. Helps modulate mRNA selection, yielding the 30S pre-initiation complex (PIC). Upon addition of the 50S ribosomal subunit IF-1, IF-2 and IF-3 are released leaving the mature 70S translation initiation complex. The chain is Translation initiation factor IF-1 from Acholeplasma laidlawii (strain PG-8A).